The sequence spans 354 residues: tRNA N6-adenosine threonylcarbamoyltransferase (354 aa).

Fe cation-binding residues include H116 and H120. Substrate contacts are provided by residues 139 to 143, D172, G185, and N281; that span reads LVSGG. D309 serves as a coordination point for Fe cation.

The protein belongs to the KAE1 / TsaD family. Requires Fe(2+) as cofactor.

The protein localises to the cytoplasm. The enzyme catalyses L-threonylcarbamoyladenylate + adenosine(37) in tRNA = N(6)-L-threonylcarbamoyladenosine(37) in tRNA + AMP + H(+). Functionally, required for the formation of a threonylcarbamoyl group on adenosine at position 37 (t(6)A37) in tRNAs that read codons beginning with adenine. Is involved in the transfer of the threonylcarbamoyl moiety of threonylcarbamoyl-AMP (TC-AMP) to the N6 group of A37, together with TsaE and TsaB. TsaD likely plays a direct catalytic role in this reaction. The protein is tRNA N6-adenosine threonylcarbamoyltransferase of Parasynechococcus marenigrum (strain WH8102).